The primary structure comprises 452 residues: UDP-N-acetylmuramoylalanine--D-glutamate ligase (452 aa).

Residue 119 to 125 (GSNGKTT) participates in ATP binding.

It belongs to the MurCDEF family.

It localises to the cytoplasm. The enzyme catalyses UDP-N-acetyl-alpha-D-muramoyl-L-alanine + D-glutamate + ATP = UDP-N-acetyl-alpha-D-muramoyl-L-alanyl-D-glutamate + ADP + phosphate + H(+). It functions in the pathway cell wall biogenesis; peptidoglycan biosynthesis. Its function is as follows. Cell wall formation. Catalyzes the addition of glutamate to the nucleotide precursor UDP-N-acetylmuramoyl-L-alanine (UMA). The chain is UDP-N-acetylmuramoylalanine--D-glutamate ligase from Streptococcus pyogenes serotype M28 (strain MGAS6180).